Reading from the N-terminus, the 461-residue chain is Photosystem II CP43 reaction center protein (461 aa).

A propeptide spanning residues 1-2 (ME) is cleaved from the precursor. The residue at position 3 (T3) is an N-acetylthreonine. Position 3 is a phosphothreonine (T3). Helical transmembrane passes span 57-81 (LFEV…PHLA), 122-143 (LLGP…KDRN), 166-188 (KALY…RKIT), 243-263 (KPFA…LSYS), and 279-300 (WFNN…ASQA). [CaMn4O5] cluster is bound at residue E355. The helical transmembrane segment at 435–459 (RARAAAAGFEKGIDRDFEPVLSMTP) threads the bilayer.

This sequence belongs to the PsbB/PsbC family. PsbC subfamily. As to quaternary structure, PSII is composed of 1 copy each of membrane proteins PsbA, PsbB, PsbC, PsbD, PsbE, PsbF, PsbH, PsbI, PsbJ, PsbK, PsbL, PsbM, PsbT, PsbX, PsbY, PsbZ, Psb30/Ycf12, at least 3 peripheral proteins of the oxygen-evolving complex and a large number of cofactors. It forms dimeric complexes. Binds multiple chlorophylls and provides some of the ligands for the Ca-4Mn-5O cluster of the oxygen-evolving complex. It may also provide a ligand for a Cl- that is required for oxygen evolution. PSII binds additional chlorophylls, carotenoids and specific lipids. serves as cofactor.

Its subcellular location is the plastid. The protein localises to the chloroplast thylakoid membrane. One of the components of the core complex of photosystem II (PSII). It binds chlorophyll and helps catalyze the primary light-induced photochemical processes of PSII. PSII is a light-driven water:plastoquinone oxidoreductase, using light energy to abstract electrons from H(2)O, generating O(2) and a proton gradient subsequently used for ATP formation. The protein is Photosystem II CP43 reaction center protein of Platanus occidentalis (Sycamore).